The primary structure comprises 294 residues: tRNA-uridine aminocarboxypropyltransferase 1 (294 aa).

The segment at 158 to 185 is disordered; that stretch reads DMQNDSSCEPSLKRPKCSQQYDKSKNEG. Residues 202–205 carry the DXTW motif; sequence DSTW.

This sequence belongs to the TDD superfamily. DTWD1 family.

The protein resides in the nucleus. It catalyses the reaction a uridine in tRNA + S-adenosyl-L-methionine = a 3-[(3S)-3-amino-3-carboxypropyl]uridine in tRNA + S-methyl-5'-thioadenosine + H(+). Catalyzes the formation of 3-(3-amino-3-carboxypropyl)uridine (acp3U) at position 20 in the D-loop of several cytoplasmic tRNAs (acp3U(20)). This chain is tRNA-uridine aminocarboxypropyltransferase 1, found in Xenopus tropicalis (Western clawed frog).